The chain runs to 633 residues: uncharacterized protein (633 aa).

This is an uncharacterized protein from Acanthamoeba polyphaga mimivirus (APMV).